The primary structure comprises 273 residues: Citrate lyase subunit beta-like protein (273 aa).

Residues arginine 64 and glutamate 112 each contribute to the substrate site. The Mg(2+) site is built by glutamate 112 and aspartate 138.

This sequence belongs to the HpcH/HpaI aldolase family. Citrate lyase beta subunit-like subfamily. Homotrimer. It depends on Mg(2+) as a cofactor.

In terms of biological role, may play a role in fatty acid biosynthesis. The chain is Citrate lyase subunit beta-like protein (citE) from Mycobacterium tuberculosis (strain CDC 1551 / Oshkosh).